The sequence spans 229 residues: N-acetyltransferase MPR1 (229 aa).

An N-acetyltransferase domain is found at 65–219 (FNLEIESGKT…DAIIYGKDLT (155 aa)). Position 135 (Asn135) interacts with substrate. CoA is bound at residue 145 to 150 (RGQKVG). 172-173 (NL) is a binding site for substrate.

This sequence belongs to the acetyltransferase family. As to quaternary structure, homodimer. Post-translationally, not glycosylated.

It is found in the cytoplasm. The protein localises to the mitochondrion. The catalysed reaction is L-glutamate 5-semialdehyde + acetyl-CoA = N-acetyl-L-glutamate 5-semialdehyde + CoA + H(+). In terms of biological role, N-acetyltransferase involved in oxidative stress resistance. Acetylates the toxic proline metabolism intermediate (S)-1-pyrroline-5-carboxylate (P5C), or more likely its spontaneously forming tautomer glutamate-5-semialdehyde (GSA) into N-acetyl-GSA for arginine synthesis in the mitochondria. P5C has been shown to increase the levels of reactive oxygen species (ROS) in the cell by inhibiting the function of the respiratory chain in the mitochondria. The enzyme is able to reduce intracellular ROS levels under P5C-induced oxidative stress and protects cells from damage by oxidative stress. Also acetylates and thereby detoxifies the proline analog azetidine-2-carboxylate (AZC), however it is unlikely that AZC is a natural substrate as it occurs only in plants belonging to the Lilaceae family. Does not acetylate proline. This is N-acetyltransferase MPR1 from Saccharomyces cerevisiae (Baker's yeast).